A 157-amino-acid chain; its full sequence is Ribosomal RNA large subunit methyltransferase H (157 aa).

Residues leucine 73, glycine 105, and 124-129 (LSRMTF) each bind S-adenosyl-L-methionine.

It belongs to the RNA methyltransferase RlmH family. In terms of assembly, homodimer.

It is found in the cytoplasm. The catalysed reaction is pseudouridine(1915) in 23S rRNA + S-adenosyl-L-methionine = N(3)-methylpseudouridine(1915) in 23S rRNA + S-adenosyl-L-homocysteine + H(+). Its function is as follows. Specifically methylates the pseudouridine at position 1915 (m3Psi1915) in 23S rRNA. The protein is Ribosomal RNA large subunit methyltransferase H of Porphyromonas gingivalis (strain ATCC BAA-308 / W83).